We begin with the raw amino-acid sequence, 166 residues long: Phosphopantetheine adenylyltransferase (166 aa).

T11 contacts substrate. ATP-binding positions include 11-12 (TF) and H19. Substrate-binding residues include K43, T79, and R93. ATP is bound by residues E104 and 128-134 (LEPLNST).

This sequence belongs to the bacterial CoaD family. In terms of assembly, homohexamer. Mg(2+) is required as a cofactor.

It is found in the cytoplasm. The enzyme catalyses (R)-4'-phosphopantetheine + ATP + H(+) = 3'-dephospho-CoA + diphosphate. Its pathway is cofactor biosynthesis; coenzyme A biosynthesis; CoA from (R)-pantothenate: step 4/5. Its function is as follows. Reversibly transfers an adenylyl group from ATP to 4'-phosphopantetheine, yielding dephospho-CoA (dPCoA) and pyrophosphate. The sequence is that of Phosphopantetheine adenylyltransferase from Lactococcus lactis subsp. cremoris (strain MG1363).